We begin with the raw amino-acid sequence, 224 residues long: Ras-related protein RABA4b (224 aa).

An N-acetylalanine modification is found at A2. 24–31 is a GTP binding site; sequence GDSAVGKS. The short motif at 46-54 is the Effector region element; that stretch reads SKATIGVEF. GTP contacts are provided by residues 72–76, 130–133, and 160–161; these read DTAGQ, NKSD, and SA. S-geranylgeranyl cysteine attachment occurs at residues C220 and C221.

The protein belongs to the small GTPase superfamily. Rab family. Interacts with TCTP1. As to expression, expressed in roots, stems, leaves and flowers. Expressed in tips of growing root hair cells.

The protein localises to the early endosome membrane. It localises to the golgi apparatus. Its subcellular location is the trans-Golgi network membrane. Regulator of membrane trafficking. May be required for secretion of cell wall components in cells. This chain is Ras-related protein RABA4b, found in Arabidopsis thaliana (Mouse-ear cress).